The primary structure comprises 546 residues: CTP synthase (546 aa).

Residues 1-266 (MTTNYIFVTG…DELVCKRFGI (266 aa)) form an amidoligase domain region. S14 lines the CTP pocket. Residue S14 coordinates UTP. Residues 15-20 (SLGKGI) and D72 each bind ATP. Mg(2+) is bound by residues D72 and E140. CTP contacts are provided by residues 147–149 (DIE), 187–192 (KTKPTQ), and K223. UTP is bound by residues 187–192 (KTKPTQ) and K223. Residue 239–241 (RDV) participates in ATP binding. A Glutamine amidotransferase type-1 domain is found at 291–542 (TIGMVGKYIE…VKAAGEFQRG (252 aa)). G352 is a binding site for L-glutamine. The Nucleophile; for glutamine hydrolysis role is filled by C379. L-glutamine-binding positions include 380 to 383 (LGMQ), E403, and R470. Catalysis depends on residues H515 and E517.

Belongs to the CTP synthase family. As to quaternary structure, homotetramer.

The enzyme catalyses UTP + L-glutamine + ATP + H2O = CTP + L-glutamate + ADP + phosphate + 2 H(+). It carries out the reaction L-glutamine + H2O = L-glutamate + NH4(+). The catalysed reaction is UTP + NH4(+) + ATP = CTP + ADP + phosphate + 2 H(+). The protein operates within pyrimidine metabolism; CTP biosynthesis via de novo pathway; CTP from UDP: step 2/2. Allosterically activated by GTP, when glutamine is the substrate; GTP has no effect on the reaction when ammonia is the substrate. The allosteric effector GTP functions by stabilizing the protein conformation that binds the tetrahedral intermediate(s) formed during glutamine hydrolysis. Inhibited by the product CTP, via allosteric rather than competitive inhibition. In terms of biological role, catalyzes the ATP-dependent amination of UTP to CTP with either L-glutamine or ammonia as the source of nitrogen. Regulates intracellular CTP levels through interactions with the four ribonucleotide triphosphates. The polypeptide is CTP synthase (Vibrio atlanticus (strain LGP32) (Vibrio splendidus (strain Mel32))).